A 384-amino-acid chain; its full sequence is Glucans biosynthesis protein C (384 aa).

Transmembrane regions (helical) follow at residues 17 to 37 (AWLM…THSW), 54 to 74 (FIHA…SYML), 91 to 111 (VGIP…ILLQ), 140 to 160 (LWFL…FTWF), 173 to 193 (AISL…YAAI), 212 to 232 (FIVM…LAFI), 240 to 260 (FTTP…AYLL), 274 to 294 (TESV…FSLG), 311 to 331 (ASLF…AYIT), and 338 to 358 (LIGF…LYEI).

This sequence belongs to the acyltransferase 3 family. OpgC subfamily.

Its subcellular location is the cell membrane. It participates in glycan metabolism; osmoregulated periplasmic glucan (OPG) biosynthesis. Its function is as follows. Necessary for the succinyl substitution of periplasmic glucans. Could catalyze the transfer of succinyl residues from the cytoplasmic side of the membrane to the nascent glucan backbones on the periplasmic side of the membrane. The sequence is that of Glucans biosynthesis protein C from Salmonella agona (strain SL483).